A 58-amino-acid polypeptide reads, in one-letter code: Ferredoxin-2 (58 aa).

4Fe-4S ferredoxin-type domains are found at residues 2-27 (IEVN…MNEE) and 30-58 (KAVV…IVRS). A [3Fe-4S] cluster-binding site is contributed by Cys8. Cysteine methyl disulfide is present on Cys11. Cys14 lines the [3Fe-4S] cluster pocket. A disulfide bond links Cys18 and Cys42. Cys50 contributes to the [3Fe-4S] cluster binding site.

Homodimer (ferredoxin I) or homotetramer (ferredoxin II). The cofactor is [3Fe-4S] cluster. [4Fe-4S] cluster serves as cofactor.

Functionally, ferredoxins are iron-sulfur proteins that transfer electrons in a wide variety of metabolic reactions. This chain is Ferredoxin-2, found in Megalodesulfovibrio gigas (Desulfovibrio gigas).